Consider the following 352-residue polypeptide: MKRYPTKKIFVGDVAVGGDAPISVQSMTFSKTADVEATVEQINRLHFAGADIVRVAVPEEEDAKALKEIKKRTSLPLVADIHFNYRLALIAAEVVDCIRINPGNIGSKERIKEVVKACKERNIPIRIGVNAGSLEKEIEAKYGATSEAMVQSALYHIKLLEDLDFTDIKVSMKASDVERTVEAYRKLRPLVPYPFHLGVTEAGTVFHATIKSAIGIGALLLEGIGDTIRVSITGELEKEIEVGRAIIKDAGRASEGLNIISCPTCGRIEADLVKAVAEVEEKTKHIKTPLNVSVMGCVVNAIGEAKHADVAIAYGKGSGLIMVKGEVVAKLPENKLVDRFLQEVQKLAKEKE.

4 residues coordinate [4Fe-4S] cluster: Cys262, Cys265, Cys297, and Glu304.

Belongs to the IspG family. [4Fe-4S] cluster serves as cofactor.

It catalyses the reaction (2E)-4-hydroxy-3-methylbut-2-enyl diphosphate + oxidized [flavodoxin] + H2O + 2 H(+) = 2-C-methyl-D-erythritol 2,4-cyclic diphosphate + reduced [flavodoxin]. It functions in the pathway isoprenoid biosynthesis; isopentenyl diphosphate biosynthesis via DXP pathway; isopentenyl diphosphate from 1-deoxy-D-xylulose 5-phosphate: step 5/6. Functionally, converts 2C-methyl-D-erythritol 2,4-cyclodiphosphate (ME-2,4cPP) into 1-hydroxy-2-methyl-2-(E)-butenyl 4-diphosphate. This chain is 4-hydroxy-3-methylbut-2-en-1-yl diphosphate synthase (flavodoxin), found in Nitratiruptor sp. (strain SB155-2).